The primary structure comprises 239 residues: Sugar fermentation stimulation protein homolog (239 aa).

It belongs to the SfsA family.

This Sinorhizobium medicae (strain WSM419) (Ensifer medicae) protein is Sugar fermentation stimulation protein homolog.